The chain runs to 206 residues: 2,3-bisphosphoglycerate-dependent phosphoglycerate mutase (206 aa).

Substrate is bound by residues 9–16 (RHGQSEWN), 22–23 (TG), R61, 88–91 (ERDY), K99, 115–116 (RR), and 159–160 (GN). The active-site Tele-phosphohistidine intermediate is H10. E88 (proton donor/acceptor) is an active-site residue.

This sequence belongs to the phosphoglycerate mutase family. BPG-dependent PGAM subfamily. In terms of assembly, homodimer.

The catalysed reaction is (2R)-2-phosphoglycerate = (2R)-3-phosphoglycerate. Its pathway is carbohydrate degradation; glycolysis; pyruvate from D-glyceraldehyde 3-phosphate: step 3/5. Catalyzes the interconversion of 2-phosphoglycerate and 3-phosphoglycerate. The chain is 2,3-bisphosphoglycerate-dependent phosphoglycerate mutase from Mesorhizobium japonicum (strain LMG 29417 / CECT 9101 / MAFF 303099) (Mesorhizobium loti (strain MAFF 303099)).